A 239-amino-acid chain; its full sequence is Fatty acid metabolism regulator protein (239 aa).

The HTH gntR-type domain occupies 6 to 74 (QSPAGFAEEY…HGKPTQVNNF (69 aa)). The H-T-H motif DNA-binding region spans 34–53 (ERELSELIGVTRTTLREVLQ).

Homodimer.

Its subcellular location is the cytoplasm. Functionally, multifunctional regulator of fatty acid metabolism. The polypeptide is Fatty acid metabolism regulator protein (Edwardsiella ictaluri (strain 93-146)).